The primary structure comprises 494 residues: Guanosine-5'-triphosphate,3'-diphosphate pyrophosphatase (494 aa).

This sequence belongs to the GppA/Ppx family. GppA subfamily.

It carries out the reaction guanosine 3'-diphosphate 5'-triphosphate + H2O = guanosine 3',5'-bis(diphosphate) + phosphate + H(+). It participates in purine metabolism; ppGpp biosynthesis; ppGpp from GTP: step 2/2. Functionally, catalyzes the conversion of pppGpp to ppGpp. Guanosine pentaphosphate (pppGpp) is a cytoplasmic signaling molecule which together with ppGpp controls the 'stringent response', an adaptive process that allows bacteria to respond to amino acid starvation, resulting in the coordinated regulation of numerous cellular activities. The chain is Guanosine-5'-triphosphate,3'-diphosphate pyrophosphatase from Escherichia coli (strain 55989 / EAEC).